Here is a 344-residue protein sequence, read N- to C-terminus: Homoserine O-acetyltransferase (344 aa).

C142 serves as the catalytic Acyl-thioester intermediate. K163 and S192 together coordinate substrate. H235 acts as the Proton acceptor in catalysis. E237 is a catalytic residue. Residue R249 participates in substrate binding.

This sequence belongs to the MetA family.

The protein localises to the cytoplasm. It catalyses the reaction L-homoserine + acetyl-CoA = O-acetyl-L-homoserine + CoA. Its pathway is amino-acid biosynthesis; L-methionine biosynthesis via de novo pathway; O-acetyl-L-homoserine from L-homoserine: step 1/1. Its function is as follows. Transfers an acetyl group from acetyl-CoA to L-homoserine, forming acetyl-L-homoserine. This Bifidobacterium adolescentis (strain ATCC 15703 / DSM 20083 / NCTC 11814 / E194a) protein is Homoserine O-acetyltransferase.